We begin with the raw amino-acid sequence, 220 residues long: Putative O-methyltransferase Mmcs_3995 (220 aa).

Residues Val-47, Glu-69, 71 to 72 (GT), Ser-77, Asp-95, and Val-96 contribute to the S-adenosyl-L-methionine site. Asp-143 serves as a coordination point for substrate. S-adenosyl-L-methionine is bound at residue Asp-145.

This sequence belongs to the class I-like SAM-binding methyltransferase superfamily. Cation-dependent O-methyltransferase family.

This chain is Putative O-methyltransferase Mmcs_3995, found in Mycobacterium sp. (strain MCS).